An 811-amino-acid chain; its full sequence is Hypoxia-inducible factor 1-alpha (811 aa).

The tract at residues 1 to 27 (MDSPGGVTDKKRISSERRKEKSRDAAR) is disordered. Residues 8–27 (TDKKRISSERRKEKSRDAAR) show a composition bias toward basic and acidic residues. A bHLH domain is found at 17-70 (RRKEKSRDAARCRRSKESEVFYELAHQLPLPHTVSAHLDKASIMRLTISYLRMR). PAS domains are found at residues 80 to 157 (TEAN…PVKK) and 228 to 298 (PHPS…FTKG). The PAC domain maps to 302–345 (TGQYRMLAKQGGYVWVETQATVIYNTKNSQPQCIVCVNYVLSGI). The tract at residues 401 to 587 (APAAGDTIIS…LSPLESSSSG (187 aa)) is ODD. P402 carries the 4-hydroxyproline modification. A disordered region spans residues 490–518 (PQVQEQPTSPSDASTSQSSPEPSSPNDYC). Low complexity predominate over residues 496–514 (PTSPSDASTSQSSPEPSSP). The interval 529 to 573 (FKLELVEKLFAIDTEAKNPFSTQETDLDLEMLAPYIPMDDDFQLR) is NTAD. Residue P562 is modified to 4-hydroxyproline. Positions 576–785 (DQLSPLESSS…GLPQLTSYDC (210 aa)) are ID. Positions 634–652 (NDTSSAPASPYSGNRSRTA) are enriched in polar residues. A disordered region spans residues 634–655 (NDTSSAPASPYSGNRSRTASPI). 2 short sequence motifs (nuclear localization signal) span residues 703 to 706 (RKRK) and 718 to 721 (GIGS). Residues 771-811 (SMDESGLPQLTSYDCEVNAPIQGNRNLLQGEELLRALDQVN) form a CTAD region. The residue at position 788 (N788) is a (3S)-3-hydroxyasparagine.

As to quaternary structure, efficient DNA binding requires heterodimerization of an alpha and a beta/ARNT subunit. In normoxia, is hydroxylated on Pro-402 and Pro-562. The hydroxylated prolines promote interaction with VHL, initiating rapid ubiquitination and subsequent proteasomal degradation. Under hypoxia, proline hydroxylation is impaired and ubiquitination is attenuated, resulting in stabilization. In terms of processing, in normoxia, is hydroxylated on Asn-788, thus abrogating interaction with CREBBP and EP300 and preventing transcriptional activation. Post-translationally, the iron and 2-oxoglutarate dependent 3-hydroxylation of asparagine is (S) stereospecific within HIF CTAD domains.

It is found in the cytoplasm. The protein localises to the nucleus. The protein resides in the nucleus speckle. Its activity is regulated as follows. Induced by reactive oxygen species (ROS). In terms of biological role, functions as a master transcriptional regulator of the adaptive response to hypoxia. Under hypoxic conditions, activates the transcription of over 40 genes, including erythropoietin, glucose transporters, glycolytic enzymes, vascular endothelial growth factor, HILPDA, and other genes whose protein products increase oxygen delivery or facilitate metabolic adaptation to hypoxia. Plays an essential role in embryonic vascularization, tumor angiogenesis and pathophysiology of ischemic disease. The polypeptide is Hypoxia-inducible factor 1-alpha (HIF1A) (Gallus gallus (Chicken)).